A 94-amino-acid chain; its full sequence is DASH complex subunit dad2 (94 aa).

A coiled-coil region spans residues 18–38; it reads KLRDSSNDMVQQIETLAAKLE. The tract at residues 72 to 94 is disordered; the sequence is VRIPPSTSNTNASATEQGDVEEV. Polar residues predominate over residues 76 to 87; the sequence is PSTSNTNASATE.

This sequence belongs to the DASH complex DAD2 family. Component of the DASH complex consisting of ask1, dad1, dad2, dad3, dad4, dam1, duo1, dad5, spc19 and spc34, with a stoichiometry of one copy of each subunit per complex. Multiple DASH complexes oligomerize to form a ring that encircles spindle microtubules and organizes the rod-like NDC80 complexes of the outer kinetochore. DASH complex oligomerization strengthens microtubule attachments. On cytoplasmic microtubules, DASH complexes appear to form patches instead of rings.

It is found in the nucleus. Its subcellular location is the cytoplasm. The protein localises to the cytoskeleton. It localises to the spindle. The protein resides in the chromosome. It is found in the centromere. Its subcellular location is the kinetochore. Its function is as follows. Component of the DASH complex that connects microtubules with kinetochores and couples microtubule depolymerisation to chromosome movement; it is involved in retrieving kinetochores to the spindle poles before their re-orientation on the spindle in early mitosis and allows microtubule depolymerization to pull chromosomes apart and resist detachment during anaphase. Kinetochores, consisting of a centromere-associated inner segment and a microtubule-contacting outer segment, play a crucial role in chromosome segregation by mediating the physical connection between centromeric DNA and microtubules. Kinetochores also serve as an input point for the spindle assembly checkpoint, which delays anaphase until all chromosomes have bioriented on the mitotic spindle. The DASH complex mediates bipolar kinetochore-microtubule attachments and facilitates the formation of additional interactions between outer kinetochore components and spindle microtubules. During chromosome movement along the microtubule, it is required both for the sliding of kinetochores along the lateral side of the microtubule and also for microtubule end-on pulling on the kinetochore. Modulates cytoplasmic microtubule dynamics by tracking the plus-end of shortening microtubules and slowing their depolymerization. This chain is DASH complex subunit dad2, found in Schizosaccharomyces pombe (strain 972 / ATCC 24843) (Fission yeast).